Here is a 493-residue protein sequence, read N- to C-terminus: Matrilin-1 (493 aa).

The signal sequence occupies residues 1 to 23; sequence MDGIFCALPLSLLLLLQSCGVWG. The VWFA 1 domain occupies 24 to 220; that stretch reads APPQPRGTLC…THKFQEAFCV (197 aa). N74 carries N-linked (GlcNAc...) asparagine glycosylation. Residues 221-261 form the EGF-like domain; sequence VSDLCATGDHDCEQICISTPGSYKCACKEGFTLNNDGKTCS. 3 disulfides stabilise this stretch: C225–C236, C232–C245, and C247–C260. One can recognise a VWFA 2 domain in the interval 262–450; sequence ACSGGSGSAL…GKKLQMKICV (189 aa). Residues 462 to 492 are a coiled coil; it reads KFQTKVEELINTLQQKLEAVAKRIEALENKI.

In terms of assembly, homotrimer. Expressed in xyphoid cartilage and chondrocytes (at protein level).

It localises to the secreted. The protein resides in the extracellular space. Its subcellular location is the extracellular matrix. Its function is as follows. A major component of the extracellular matrix of non-articular cartilage. Binds to type 2 collagens and forms long concatenated protein networks as part of the extracellular matrix. Required for the network-like organization and bundling of collagen fibrils surrounding chondrocytes in the zones of maturation and hypertrophy. Required for mechanotransduction and adaption to mechanical loading in cartilage chondrocytes, resulting in an increase in expression of the extracellular matrix components ACAN and COL2A1. Acts as a moderator of angiogenesis in response to injury. The sequence is that of Matrilin-1 from Gallus gallus (Chicken).